The primary structure comprises 453 residues: Ankyrin repeat and SOCS box protein 16 (453 aa).

7 ANK repeats span residues 56–85, 110–139, 142–171, 175–204, 209–238, 242–279, and 283–312; these read CRDP…AANM, KQTA…ELDA, GGRA…KANV, EGTT…TVNL, SQET…DVGL, QGET…DARA, and KRHT…RAEV. An SOCS box domain is found at 398–450; the sequence is YSSALCMVNQPRQLQHLARLAVRARLGSRCRQGATRLPLPPLLRDYLLLRVEG.

It belongs to the ankyrin SOCS box (ASB) family.

It functions in the pathway protein modification; protein ubiquitination. Its function is as follows. May be a substrate-recognition component of a SCF-like ECS (Elongin-Cullin-SOCS-box protein) E3 ubiquitin-protein ligase complex which mediates the ubiquitination and subsequent proteasomal degradation of target proteins. The polypeptide is Ankyrin repeat and SOCS box protein 16 (ASB16) (Homo sapiens (Human)).